The primary structure comprises 155 residues: Small ribosomal subunit protein uS7cz/uS7cy (155 aa).

The protein belongs to the universal ribosomal protein uS7 family. In terms of assembly, part of the 30S ribosomal subunit.

Its subcellular location is the plastid. The protein localises to the chloroplast. One of the primary rRNA binding proteins, it binds directly to 16S rRNA where it nucleates assembly of the head domain of the 30S subunit. In Calycanthus floridus var. glaucus (Eastern sweetshrub), this protein is Small ribosomal subunit protein uS7cz/uS7cy (rps7-A).